The following is a 555-amino-acid chain: Developmental regulatory protein wetA (555 aa).

4 disordered regions span residues 113-171, 250-310, 419-488, and 508-531; these read TGHS…LMRS, QSPA…SESL, TQAV…RGGK, and GVAP…RRRK. Polar residues-rich tracts occupy residues 162–171, 259–281, 293–310, 419–431, and 464–488; these read QSFSPGLMRS, PSAN…SALT, SPHS…SESL, TQAV…SPSI, and SGQS…RGGK.

The protein belongs to the wetA family.

BrlA, abaA and wetA are pivotal regulators of conidiophore development and conidium maturation. They act individually and together to regulate their own expression and that of numerous other sporulation-specific genes. Responsible for activating a set of genes whose products make up the final two conidial wall layers or direct their assembly and, through this activity, is responsible for acquisition of spore dormancy. The sequence is that of Developmental regulatory protein wetA from Emericella nidulans (strain FGSC A4 / ATCC 38163 / CBS 112.46 / NRRL 194 / M139) (Aspergillus nidulans).